Reading from the N-terminus, the 350-residue chain is Protein RecA (350 aa).

67-74 (GPESSGKT) is a binding site for ATP.

Belongs to the RecA family.

Its subcellular location is the cytoplasm. Functionally, can catalyze the hydrolysis of ATP in the presence of single-stranded DNA, the ATP-dependent uptake of single-stranded DNA by duplex DNA, and the ATP-dependent hybridization of homologous single-stranded DNAs. It interacts with LexA causing its activation and leading to its autocatalytic cleavage. The polypeptide is Protein RecA (Baumannia cicadellinicola subsp. Homalodisca coagulata).